The primary structure comprises 305 residues: Glycine--tRNA ligase alpha subunit (305 aa).

Belongs to the class-II aminoacyl-tRNA synthetase family. In terms of assembly, tetramer of two alpha and two beta subunits.

The protein localises to the cytoplasm. It catalyses the reaction tRNA(Gly) + glycine + ATP = glycyl-tRNA(Gly) + AMP + diphosphate. This is Glycine--tRNA ligase alpha subunit from Vibrio campbellii (strain ATCC BAA-1116).